A 404-amino-acid polypeptide reads, in one-letter code: Propionate kinase (404 aa).

The protein belongs to the acetokinase family. PduW subfamily.

Its subcellular location is the cytoplasm. The enzyme catalyses propanoate + ATP = propanoyl phosphate + ADP. The protein operates within polyol metabolism; 1,2-propanediol degradation. In terms of biological role, works with phosphate acetyltransferase (pta) to capture exogenous propionate and regenerate propionyl-CoA during degradation of 1,2-propanediol (1,2-PD). Its function is as follows. Expression of a cosmid containing the full 21-gene pdu operon in E.coli allows E.coli to grow on 1,2-propanediol (1,2-PD) with the appearance of bacterial microcompartments (BMC) in its cytoplasm. This is Propionate kinase from Citrobacter freundii.